The following is a 187-amino-acid chain: Benzene 1,2-dioxygenase subunit beta (187 aa).

It belongs to the bacterial ring-hydroxylating dioxygenase beta subunit family. In terms of assembly, this dioxygenase system consists of four proteins: the two subunits of the hydroxylase component (BnzA and BnzB), a ferredoxin (BnzC) and a ferredoxin reductase (BnzD). [2Fe-2S] cluster is required as a cofactor. Fe cation serves as cofactor.

It carries out the reaction benzene + NADH + O2 + H(+) = cis-1,2-dihydrobenzene-1,2-diol + NAD(+). The catalysed reaction is toluene + NADH + O2 + H(+) = (1S,2R)-3-methylcyclohexa-3,5-diene-1,2-diol + NAD(+). The protein operates within aromatic compound metabolism; benzene degradation; catechol from benzene: step 1/2. It functions in the pathway xenobiotic degradation; toluene degradation. It participates in xenobiotic degradation; xylene degradation. Catalyzes both the oxidation of benzene and toluene. The beta subunit may be responsible for the substrate specificity of the enzyme. The protein is Benzene 1,2-dioxygenase subunit beta (bnzB) of Pseudomonas putida (strain ATCC 700007 / DSM 6899 / JCM 31910 / BCRC 17059 / LMG 24140 / F1).